The following is a 412-amino-acid chain: Double C2-like domain-containing protein beta (412 aa).

The negatively regulates targeting to plasma membrane stretch occupies residues 1–36; that stretch reads MTLRRRGEKATISIQEHMAIDVCPGPIRPIKQISDY. The tract at residues 1-90 is mediates interaction with DYNLT1; it reads MTLRRRGEKA…EDVDQLFGAY (90 aa). A disordered region spans residues 38 to 123; that stretch reads PRFPRGLPPT…PDVDGYESDD (86 aa). Over residues 43-58 the composition is skewed to pro residues; sequence GLPPTAAPRAPAPPDA. Residues 59 to 74 show a composition bias toward low complexity; sequence PARSPAASASPRSPSD. Residues 95–108 are compositionally biased toward pro residues; it reads GPSPGPSPARPPAK. The span at 112–123 shows a compositional bias: acidic residues; that stretch reads DEPDVDGYESDD. 2 consecutive C2 domains span residues 126-250 and 266-399; these read ALGT…SICL and ERGR…ERWH. Asp157, Asp163, Asp218, Asp220, Asp297, Asp303, Asp357, Asp359, and Asp365 together coordinate Ca(2+). Positions 257 to 375 are mediates interaction with STXBP3; sequence DKAEDKSLEE…FIGGVVLGIN (119 aa). At Ser411 the chain carries Phosphoserine.

As to quaternary structure, interacts with cytoplasmic dynein light chain DYNLT1. May interact with UNC13A; the interaction mediates targeting to the plasma membrane. Probably interacts with the SNARE (soluble N-ethylmaleimide-sensitive factor attached protein receptor) complex composed of SNAP25, STX1A and VAMP2; the interaction is calcium-dependent and competitive with SYT1. Interacts with STX4; the interaction is calcium-dependent, increased by insulin and glucose, and mediates vesicle fusion with plasma membrane in pancreatic cells and adipocytes. Interacts with STXBP3; the interaction is direct, occurs at the cell membrane and regulates glucose-stimulated insulin secretion. It depends on Ca(2+) as a cofactor. As to expression, widely expressed. Expressed in pancreatic islet cells (at protein level).

It is found in the cytoplasm. It localises to the cytoplasmic granule. The protein localises to the cell membrane. In terms of biological role, calcium sensor which positively regulates SNARE-dependent fusion of vesicles with membranes. Binds phospholipids in a calcium-dependent manner and may act at the priming stage of fusion by modifying membrane curvature to stimulate fusion. Involved in calcium-triggered exocytosis in chromaffin cells and calcium-dependent spontaneous release of neurotransmitter in absence of action potentials in neuronal cells. Involved both in glucose-stimulated insulin secretion in pancreatic cells and insulin-dependent GLUT4 transport to the plasma membrane in adipocytes. This chain is Double C2-like domain-containing protein beta (Doc2b), found in Mus musculus (Mouse).